The chain runs to 464 residues: MGLTDIFLNLLLFVYPAVFIIYQIILYEISARKQINQEALKYSNLPVLSIIVPIKNEEISVIQGLLDNLSNLIWDKKKLEIIIVSDDNEDYFTKIINTVKVPKDLTVYFYRREKKLGYKSGALQYGFEKATGDLILTIDVDSRLPPNALINAYEKMQSNTCDAIVFQWNGYSSNQYSTLAKGMVVSTLFASKALFEGKEKLKLKIYPVGSGTMFSREALRVVNGWDYRLVQDDLEIGTRLIYNGKNVCASGIPIYVEVPDNFYSFYVQQTRWAMGSAEVLRNRLKYIIKSKISFTQRMDLIIYLLQYTPVIVTFFISTLLSLMLPFRIGHDPLNSPALLFWLVSLGLYASLLLSLALKLGLNLKDSLMGIGRLTAFTVSISPFIVFNFFKGLLKSGNTYVITPKGTVKKTNKLLRIIAIIGVFGLLYLLSSILYIYEGYYVTGIWLLYYSSAYLYTMLLYYKEL.

Helical transmembrane passes span 6–26 (IFLNLLLFVYPAVFIIYQIIL), 300–320 (LIIYLLQYTPVIVTFFISTLL), 337–357 (ALLFWLVSLGLYASLLLSLAL), 373–393 (LTAFTVSISPFIVFNFFKGLL), 416–436 (IIAIIGVFGLLYLLSSILYIY), and 439–459 (YYVTGIWLLYYSSAYLYTMLL).

Belongs to the glycosyltransferase 2 family.

It is found in the cell membrane. Its function is as follows. Probably part of a 4-gene DNA damage response locus in which the upstream ups system, in combination with this downstream locus, functions in homologous recombination to rescue Sulfolobales from DNA-damaging threats. The protein is Probable glycosyltransferase Saci_1499 of Sulfolobus acidocaldarius (strain ATCC 33909 / DSM 639 / JCM 8929 / NBRC 15157 / NCIMB 11770).